Consider the following 63-residue polypeptide: Large ribosomal subunit protein uL29 (63 aa).

It belongs to the universal ribosomal protein uL29 family.

This chain is Large ribosomal subunit protein uL29, found in Vibrio campbellii (strain ATCC BAA-1116).